The following is a 361-amino-acid chain: DNA replication and repair protein RecF (361 aa).

Residue 30-37 (GPNGSGKT) coordinates ATP.

The protein belongs to the RecF family.

The protein resides in the cytoplasm. The RecF protein is involved in DNA metabolism; it is required for DNA replication and normal SOS inducibility. RecF binds preferentially to single-stranded, linear DNA. It also seems to bind ATP. The sequence is that of DNA replication and repair protein RecF from Erwinia tasmaniensis (strain DSM 17950 / CFBP 7177 / CIP 109463 / NCPPB 4357 / Et1/99).